The chain runs to 256 residues: Ribosomal RNA small subunit methyltransferase A (256 aa).

S-adenosyl-L-methionine is bound by residues His-12, Leu-14, Gly-39, Glu-60, Asp-83, and Asn-101.

Belongs to the class I-like SAM-binding methyltransferase superfamily. rRNA adenine N(6)-methyltransferase family. RsmA subfamily.

It is found in the cytoplasm. It carries out the reaction adenosine(1518)/adenosine(1519) in 16S rRNA + 4 S-adenosyl-L-methionine = N(6)-dimethyladenosine(1518)/N(6)-dimethyladenosine(1519) in 16S rRNA + 4 S-adenosyl-L-homocysteine + 4 H(+). Specifically dimethylates two adjacent adenosines (A1518 and A1519) in the loop of a conserved hairpin near the 3'-end of 16S rRNA in the 30S particle. May play a critical role in biogenesis of 30S subunits. The polypeptide is Ribosomal RNA small subunit methyltransferase A (Nitrosomonas eutropha (strain DSM 101675 / C91 / Nm57)).